The following is a 179-amino-acid chain: ATP synthase subunit delta (179 aa).

This sequence belongs to the ATPase delta chain family. As to quaternary structure, F-type ATPases have 2 components, F(1) - the catalytic core - and F(0) - the membrane proton channel. F(1) has five subunits: alpha(3), beta(3), gamma(1), delta(1), epsilon(1). F(0) has three main subunits: a(1), b(2) and c(10-14). The alpha and beta chains form an alternating ring which encloses part of the gamma chain. F(1) is attached to F(0) by a central stalk formed by the gamma and epsilon chains, while a peripheral stalk is formed by the delta and b chains.

Its subcellular location is the cell inner membrane. F(1)F(0) ATP synthase produces ATP from ADP in the presence of a proton or sodium gradient. F-type ATPases consist of two structural domains, F(1) containing the extramembraneous catalytic core and F(0) containing the membrane proton channel, linked together by a central stalk and a peripheral stalk. During catalysis, ATP synthesis in the catalytic domain of F(1) is coupled via a rotary mechanism of the central stalk subunits to proton translocation. Its function is as follows. This protein is part of the stalk that links CF(0) to CF(1). It either transmits conformational changes from CF(0) to CF(1) or is implicated in proton conduction. The chain is ATP synthase subunit delta from Polaromonas naphthalenivorans (strain CJ2).